The following is a 1297-amino-acid chain: Phosphoribosylformylglycinamidine synthase (1297 aa).

Residues Phe-305–Arg-324 form a disordered region. Position 307-318 (Gly-307–Asp-318) interacts with ATP. Mg(2+) contacts are provided by Asp-679, Glu-718, Asn-722, and Asp-886. Ser-888 contacts ATP. Positions Ile-1044–Lys-1297 constitute a Glutamine amidotransferase type-1 domain. Cys-1137 (nucleophile) is an active-site residue. Active-site residues include His-1262 and Glu-1264.

In the N-terminal section; belongs to the FGAMS family. Monomer.

The protein localises to the cytoplasm. It carries out the reaction N(2)-formyl-N(1)-(5-phospho-beta-D-ribosyl)glycinamide + L-glutamine + ATP + H2O = 2-formamido-N(1)-(5-O-phospho-beta-D-ribosyl)acetamidine + L-glutamate + ADP + phosphate + H(+). It functions in the pathway purine metabolism; IMP biosynthesis via de novo pathway; 5-amino-1-(5-phospho-D-ribosyl)imidazole from N(2)-formyl-N(1)-(5-phospho-D-ribosyl)glycinamide: step 1/2. Its function is as follows. Phosphoribosylformylglycinamidine synthase involved in the purines biosynthetic pathway. Catalyzes the ATP-dependent conversion of formylglycinamide ribonucleotide (FGAR) and glutamine to yield formylglycinamidine ribonucleotide (FGAM) and glutamate. The chain is Phosphoribosylformylglycinamidine synthase from Mannheimia succiniciproducens (strain KCTC 0769BP / MBEL55E).